We begin with the raw amino-acid sequence, 190 residues long: B3 domain-containing protein At4g01580 (190 aa).

Residues 1–25 (MVITRNMKARATSVSHRQSQQDPES) are disordered. Over residues 12-23 (TSVSHRQSQQDP) the composition is skewed to polar residues. The TF-B3 DNA-binding region spans 29–122 (KFFKLVLPST…SFRVIIFNAS (94 aa)).

It localises to the nucleus. The sequence is that of B3 domain-containing protein At4g01580 from Arabidopsis thaliana (Mouse-ear cress).